We begin with the raw amino-acid sequence, 138 residues long: Acidic phospholipase A2 Ts-A1 (138 aa).

Residues methionine 1–glycine 16 form the signal peptide. Intrachain disulfides connect cysteine 42/cysteine 131, cysteine 44/cysteine 60, cysteine 59/cysteine 111, cysteine 65/cysteine 138, cysteine 66/cysteine 104, cysteine 73/cysteine 97, and cysteine 91/cysteine 102. Residues phenylalanine 43, glycine 45, and glycine 47 each coordinate Ca(2+). Histidine 63 is an active-site residue. Aspartate 64 provides a ligand contact to Ca(2+). Aspartate 105 is an active-site residue.

Ca(2+) serves as cofactor. As to expression, expressed by the venom gland.

It localises to the secreted. The enzyme catalyses a 1,2-diacyl-sn-glycero-3-phosphocholine + H2O = a 1-acyl-sn-glycero-3-phosphocholine + a fatty acid + H(+). Snake venom phospholipase A2 (PLA2) that shows a moderate inhibition of ADP-induced human platelet aggregation when tested on platelet rich plasma. Exhibits high hydrolytic activities and prefers the anionic micelles (dPPC with deoxycholate) to the zwitterionic micelles (dPPC with Triton X-100). PLA2 catalyzes the calcium-dependent hydrolysis of the 2-acyl groups in 3-sn-phosphoglycerides. The sequence is that of Acidic phospholipase A2 Ts-A1 from Trimeresurus stejnegeri (Chinese green tree viper).